The chain runs to 57 residues: Potassium channel toxin alpha-KTx 17.2 (57 aa).

The N-terminal stretch at Met-1–Arg-26 is a signal peptide. Cystine bridges form between Cys-30–Cys-46, Cys-36–Cys-51, and Cys-40–Cys-53.

The protein belongs to the short scorpion toxin superfamily. Potassium channel inhibitor family. Alpha-KTx 17 subfamily. As to expression, expressed by the venom gland.

Its subcellular location is the secreted. Its function is as follows. Inhibits voltage-gated potassium channels. The sequence is that of Potassium channel toxin alpha-KTx 17.2 from Lychas mucronatus (Chinese swimming scorpion).